The primary structure comprises 159 residues: Cyclic pyranopterin monophosphate synthase (159 aa).

Residues 75 to 77 (LCH) and 113 to 114 (ME) each bind substrate. Residue Asp-128 is part of the active site.

It belongs to the MoaC family. In terms of assembly, homohexamer; trimer of dimers.

It catalyses the reaction (8S)-3',8-cyclo-7,8-dihydroguanosine 5'-triphosphate = cyclic pyranopterin phosphate + diphosphate. It participates in cofactor biosynthesis; molybdopterin biosynthesis. Its function is as follows. Catalyzes the conversion of (8S)-3',8-cyclo-7,8-dihydroguanosine 5'-triphosphate to cyclic pyranopterin monophosphate (cPMP). In Yersinia pseudotuberculosis serotype O:3 (strain YPIII), this protein is Cyclic pyranopterin monophosphate synthase.